The sequence spans 7214 residues: Nonribosomal peptide synthetase atnA (7214 aa).

Residues 257-651 (ERKALEQPHA…VGRKDTQVKI (395 aa)) form an adenylation 1 region. The 77-residue stretch at 786–862 (EPVTETEKAV…AMSQIAVELS (77 aa)) folds into the Carrier 1 domain. Position 823 is an O-(pantetheine 4'-phosphoryl)serine (Ser-823). The condensation 1 stretch occupies residues 899-1318 (EDAYPATALQ…LVSQKDYTQI (420 aa)). The interval 1340-1735 (QVLATPDAPA…ARKDTQAKVR (396 aa)) is adenylation 2. The Carrier 2 domain maps to 1877–1953 (QPTSDIEKKV…ALAGRAQYIE (77 aa)). Position 1914 is an O-(pantetheine 4'-phosphoryl)serine (Ser-1914). Positions 1962–2384 (PEAEVIDEWF…RQVLETGIDE (423 aa)) are epimerization. The condensation 2 stretch occupies residues 2431-2845 (SPCSPMQLGL…MLSPLDRASL (415 aa)). The segment at 2866 to 3262 (QNARKRPHAL…VGRKDTQVKV (397 aa)) is adenylation 3. Residues 3398 to 3472 (ALETPMEETI…DMARIVVAAY (75 aa)) form the Carrier 3 domain. Position 3433 is an O-(pantetheine 4'-phosphoryl)serine (Ser-3433). A condensation 3 region spans residues 3510–3904 (VEDVYPSTSL…QLCENEDGRL (395 aa)). Residues 3943-4339 (ERARLHPDLL…VGRKDSQVKL (397 aa)) are adenylation 4. The 77-residue stretch at 4476–4552 (VPGSEAEKVI…ELAGRVTSIS (77 aa)) folds into the Carrier 4 domain. Ser-4513 is subject to O-(pantetheine 4'-phosphoryl)serine. The interval 4601–5033 (VEDVYPCSPL…TSAAMRAQLL (433 aa)) is condensation 4. Residues 5051-5446 (FHRTALRYPE…VGRKDTQIKF (396 aa)) form an adenylation 5 region. The interval 5489-5515 (FITTEGGSGHENKGSPSLKGSSGDPVS) is disordered. One can recognise a Carrier 5 domain in the interval 5591 to 5667 (APRTAMEKRL…QMANIVARNA (77 aa)). An O-(pantetheine 4'-phosphoryl)serine modification is found at Ser-5628. A condensation 5 region spans residues 5707 to 6123 (QDVYPCTPLQ…HLLGDNEIKM (417 aa)). The segment at 6145–6543 (ERAVLQPEAI…GRKDTQIKLR (399 aa)) is adenylation 6. Positions 6683–6766 (DPADKLALAL…DVARMIEHGN (84 aa)) constitute a Carrier 6 domain. Position 6725 is an O-(pantetheine 4'-phosphoryl)serine (Ser-6725). The thioesterase (TE) domain stretch occupies residues 6814 to 7194 (ILLTGATGFL…KSISYMRQIG (381 aa)). The disordered stretch occupies residues 6895-6915 (STVEGRDHPGSESGSTAGPAE).

It belongs to the NRP synthetase family.

It participates in secondary metabolite biosynthesis. Its function is as follows. Nonribosomal peptide synthetase; part of the gene cluster that mediates the biosynthesis of aspercryptins, linear lipopeptides built from six amino acids including 2 highly unusual and nonproteogenic amino acids, 2-amino-octanoic acid (2aoa) and 2-amino-dodecanol (2adol). The core structure of aspercryptins is as follows: Ser/Ala-Thr-Ile/Val-2aoa-Asn-2adol. The first step of aspercryptin biosynthesis is the generation of the fatty acid precursors, octanoic and dodecanoic acids, by the FAS subunits atnF and atnM. The fatty acid precursors are likely transformed into the corresponding alpha-amino fatty acids in three steps. First, they are hydroxylated by the cytochrome P450 monooxygenase atnE, then oxidized to the corresponding alpha-keto acids by the NAD(P)-dependent oxidoreductase atnD, and finally converted to the alpha-amino fatty acids by the PLP-dependent aminotransferases atnH or atnJ. the alpha-amino fatty acids, 2-amino-octanoic and 2-amino-dodecanoic acids, are recognized, activated, and covalently tethered to the NRPS atnA by its fourth and sixth adenylation domains. The second module of atnA is the Thr module and contains an epimerase (E) domain responsible for the epimerization of Thr to D-allo-Thr. Additionally, despite atnA having only one epimerase domain, the first amino acid of aspercryptin A1 is D-Ser, suggesting that serine is either loaded directly as D-Ser on the first module or that the epimerase domain in the threonine module epimerizes both L-Ser and L-Thr. After condensation of the hexapeptide of aspercryptin, the C-terminal reductase (TE) domain might be involved in the reductive release and production of the aldehyde hexapeptide. Further reduction would generate aspercryptins. The variety of aspercryptins produced reflects the flexibility of the atnA NRPS, allowing incorporation of alanine instead of serine, valine for isoleucine, and a C10 fatty amino alcohol instead of the C12 version. AtnB seems to be involved in the selectivity for Ile versus Val by the third module. Moreover, type B, C and D aspercryptins have an additional N-terminal cichorine, acetyl and propionyl group respectively. The polypeptide is Nonribosomal peptide synthetase atnA (Emericella nidulans (strain FGSC A4 / ATCC 38163 / CBS 112.46 / NRRL 194 / M139) (Aspergillus nidulans)).